Consider the following 123-residue polypeptide: uncharacterized protein (123 aa).

Transmembrane regions (helical) follow at residues 1–21 (MVLP…AVGC) and 103–123 (LESS…ILLF).

The protein localises to the membrane. This is an uncharacterized protein from Saccharomyces cerevisiae (strain ATCC 204508 / S288c) (Baker's yeast).